Consider the following 474-residue polypeptide: MKMTLPDFHCAEVLVVGDVMLDRYWYGPTSRISPEAPVPVVKVNTIEERPGGAANVAMNIAALGANSHLIGLTGIDDAAHALSEKLRSVKVRCDFVSVPTHPTVTKLRVLSRNQQLIRLDFEEGFDNVDAQPMFERIEQALPHIGALVLSDYAKGALSQVQEMIKLANAAKVPVLIDPKGNDFERYRGATLLTPNLSEFEAVVGHCKDDNELVEKGTRLVKGLDLQALLITRSEQGMSLLSVDQPPLHLPTQAQEVFDVTGAGDTVIGVLATAIAAGKPLNEACFLANAAAGVVVGKLGTSTVSPIELENAIRGRAETGFGVMTEFQLKQAVVDARQRGERVVMTNGCFDILHAGHVSYLENARRLGDRLIVAVNSDASTKRLKGESRPVNPLEQRMIVLSALGAVDWVVPFEEDTPQRLIADVLPDVLVKGGDYKPEEIAGSEEVWAAGGDVKVLNFEDGISTTNIIKAIKNQ.

Residues 1–318 (MKMTLPDFHC…ENAIRGRAET (318 aa)) are ribokinase. 195–198 (NLSE) serves as a coordination point for ATP. Asp-264 is an active-site residue. The cytidylyltransferase stretch occupies residues 344–474 (MTNGCFDILH…TNIIKAIKNQ (131 aa)).

The protein in the N-terminal section; belongs to the carbohydrate kinase PfkB family. In the C-terminal section; belongs to the cytidylyltransferase family. As to quaternary structure, homodimer.

It carries out the reaction D-glycero-beta-D-manno-heptose 7-phosphate + ATP = D-glycero-beta-D-manno-heptose 1,7-bisphosphate + ADP + H(+). It catalyses the reaction D-glycero-beta-D-manno-heptose 1-phosphate + ATP + H(+) = ADP-D-glycero-beta-D-manno-heptose + diphosphate. It participates in nucleotide-sugar biosynthesis; ADP-L-glycero-beta-D-manno-heptose biosynthesis; ADP-L-glycero-beta-D-manno-heptose from D-glycero-beta-D-manno-heptose 7-phosphate: step 1/4. Its pathway is nucleotide-sugar biosynthesis; ADP-L-glycero-beta-D-manno-heptose biosynthesis; ADP-L-glycero-beta-D-manno-heptose from D-glycero-beta-D-manno-heptose 7-phosphate: step 3/4. It functions in the pathway bacterial outer membrane biogenesis; LPS core biosynthesis. Functionally, catalyzes the phosphorylation of D-glycero-D-manno-heptose 7-phosphate at the C-1 position to selectively form D-glycero-beta-D-manno-heptose-1,7-bisphosphate. In terms of biological role, catalyzes the ADP transfer from ATP to D-glycero-beta-D-manno-heptose 1-phosphate, yielding ADP-D-glycero-beta-D-manno-heptose. The protein is Bifunctional protein HldE of Photorhabdus laumondii subsp. laumondii (strain DSM 15139 / CIP 105565 / TT01) (Photorhabdus luminescens subsp. laumondii).